A 470-amino-acid chain; its full sequence is MGIGRVTQVMGPVIDVRFEHNEVPEINNALHIEVPKEDGALQLTLEVALQLGDDVVRTIAMDSTDGVQRGMEVKDTGRDISVPVGDVTLGRVFNVLGETIDLDEKIDDSVRRDPIHRQAPGFDELSTKVEILETGIKVVDLLAPYIKGGKIGLFGGAGVGKTVLIQELINNIAQEHGGISVFAGVGERTREGNDLYYEMSDSGVIKKTAMVFGQMNEPPGARMRVALSGLTMAEYFRDEEGQDVLLFIDNIFRFTQAGSEVSALLGRMPSAVGYQPTLATEMGQLQERISSTNKGSVTSIQAVFVPADDYTDPAPATTFAHLDSTTNLERKLTEMGIYPAVDPLASTSRALEPSVVGQEHYDVAREVQSTLQKYRELQDIIAILGMDELSDEDKQTVERARRIQFFLSQNFHVAEQFTGQKGSYVPVKTTVADFRDILDGKYDHIPEDAFRLVGSMEDVIEKAKDMGVEV.

155–162 provides a ligand contact to ATP; sequence GGAGVGKT.

This sequence belongs to the ATPase alpha/beta chains family. F-type ATPases have 2 components, CF(1) - the catalytic core - and CF(0) - the membrane proton channel. CF(1) has five subunits: alpha(3), beta(3), gamma(1), delta(1), epsilon(1). CF(0) has three main subunits: a(1), b(2) and c(9-12). The alpha and beta chains form an alternating ring which encloses part of the gamma chain. CF(1) is attached to CF(0) by a central stalk formed by the gamma and epsilon chains, while a peripheral stalk is formed by the delta and b chains.

It localises to the cell membrane. The catalysed reaction is ATP + H2O + 4 H(+)(in) = ADP + phosphate + 5 H(+)(out). In terms of biological role, produces ATP from ADP in the presence of a proton gradient across the membrane. The catalytic sites are hosted primarily by the beta subunits. The polypeptide is ATP synthase subunit beta (Staphylococcus epidermidis (strain ATCC 35984 / DSM 28319 / BCRC 17069 / CCUG 31568 / BM 3577 / RP62A)).